The following is a 454-amino-acid chain: Bifunctional protein GlmU (454 aa).

The pyrophosphorylase stretch occupies residues 1 to 228 (MSPLHVVILA…PFEVQGVNNR (228 aa)). UDP-N-acetyl-alpha-D-glucosamine contacts are provided by residues 9–12 (LAAG), Lys-23, Gln-74, 79–80 (GT), 101–103 (YGD), Gly-138, Glu-153, Asn-168, and Asn-226. Asp-103 contributes to the Mg(2+) binding site. Asn-226 contacts Mg(2+). Residues 229 to 249 (LQLAELERWYQRQQAERLMTE) are linker. Residues 250-454 (GASLADPARI…IAGWERPKKA (205 aa)) form an N-acetyltransferase region. UDP-N-acetyl-alpha-D-glucosamine-binding residues include Arg-332 and Lys-350. The Proton acceptor role is filled by His-362. The UDP-N-acetyl-alpha-D-glucosamine site is built by Tyr-365 and Asn-376. Acetyl-CoA is bound by residues Ala-379, 385–386 (NY), Ser-404, Ala-422, and Arg-439.

In the N-terminal section; belongs to the N-acetylglucosamine-1-phosphate uridyltransferase family. This sequence in the C-terminal section; belongs to the transferase hexapeptide repeat family. Homotrimer. Requires Mg(2+) as cofactor.

It localises to the cytoplasm. It catalyses the reaction alpha-D-glucosamine 1-phosphate + acetyl-CoA = N-acetyl-alpha-D-glucosamine 1-phosphate + CoA + H(+). The enzyme catalyses N-acetyl-alpha-D-glucosamine 1-phosphate + UTP + H(+) = UDP-N-acetyl-alpha-D-glucosamine + diphosphate. It functions in the pathway nucleotide-sugar biosynthesis; UDP-N-acetyl-alpha-D-glucosamine biosynthesis; N-acetyl-alpha-D-glucosamine 1-phosphate from alpha-D-glucosamine 6-phosphate (route II): step 2/2. It participates in nucleotide-sugar biosynthesis; UDP-N-acetyl-alpha-D-glucosamine biosynthesis; UDP-N-acetyl-alpha-D-glucosamine from N-acetyl-alpha-D-glucosamine 1-phosphate: step 1/1. The protein operates within bacterial outer membrane biogenesis; LPS lipid A biosynthesis. Catalyzes the last two sequential reactions in the de novo biosynthetic pathway for UDP-N-acetylglucosamine (UDP-GlcNAc). The C-terminal domain catalyzes the transfer of acetyl group from acetyl coenzyme A to glucosamine-1-phosphate (GlcN-1-P) to produce N-acetylglucosamine-1-phosphate (GlcNAc-1-P), which is converted into UDP-GlcNAc by the transfer of uridine 5-monophosphate (from uridine 5-triphosphate), a reaction catalyzed by the N-terminal domain. The chain is Bifunctional protein GlmU from Marinobacter nauticus (strain ATCC 700491 / DSM 11845 / VT8) (Marinobacter aquaeolei).